The following is a 305-amino-acid chain: Probable G-protein coupled receptor 141 (305 aa).

Topologically, residues 1-22 are extracellular; sequence MPGHNTSRNSSCDPIVTPHLIS. N-linked (GlcNAc...) asparagine glycans are attached at residues Asn5 and Asn9. Residues 23–43 form a helical membrane-spanning segment; that stretch reads LYFIVLIGGLVGVISILFLLV. Residues 44 to 50 lie on the Cytoplasmic side of the membrane; that stretch reads KMNTRSV. The chain crosses the membrane as a helical span at residues 51-71; sequence TTMAVINLVVVHSVFLLTVPF. The Extracellular segment spans residues 72–89; sequence RLTYLIKKTWMFGLPFCK. A helical transmembrane segment spans residues 90–110; that stretch reads FVSAMLHIHMYLTFLFYVVIL. The Cytoplasmic segment spans residues 111-131; sequence VTRYLIFFKCKDKVEFYRKLH. Residues 132–152 form a helical membrane-spanning segment; that stretch reads AVAASAGMWTLVIVIVVPLVV. The Extracellular portion of the chain corresponds to 153–183; it reads SRYGIHEEYNEEHCFKFHKELAYTYVKIINY. Residues 184 to 204 traverse the membrane as a helical segment; sequence MIVIFVIAVAVILLVFQVFII. Residues 205-227 are Cytoplasmic-facing; the sequence is MLMVQKLRHSLLSHQEFWAQLKN. Residues 228 to 248 form a helical membrane-spanning segment; it reads LFFIGVILVCFLPYQFFRIYY. At 249 to 267 the chain is on the extracellular side; it reads LNVVTHSNACNSKVAFYNE. A helical membrane pass occupies residues 268–288; that stretch reads IFLSVTAISCYDLLLFVFGGS. The Cytoplasmic portion of the chain corresponds to 289–305; that stretch reads HWFKQKIIGLWNCVLCR.

Belongs to the G-protein coupled receptor 1 family.

It is found in the cell membrane. In terms of biological role, orphan receptor. The protein is Probable G-protein coupled receptor 141 (GPR141) of Homo sapiens (Human).